The sequence spans 537 residues: Glucan 1,6-alpha-glucosidase (537 aa).

Residue Asp194 is the Nucleophile of the active site. Glu236 functions as the Proton donor in the catalytic mechanism.

Belongs to the glycosyl hydrolase 13 family.

It is found in the cytoplasm. The catalysed reaction is Hydrolysis of (1-&gt;6)-alpha-D-glucosidic linkages in (1-&gt;6)-alpha-D-glucans and derived oligosaccharides.. Functionally, the physiological substrates may be short isomaltosaccharides. This chain is Glucan 1,6-alpha-glucosidase (dexB), found in Streptococcus dysgalactiae subsp. equisimilis (Streptococcus equisimilis).